A 501-amino-acid chain; its full sequence is Solute carrier family 2, facilitated glucose transporter member 5 (501 aa).

Residue Met1 is modified to N-acetylmethionine. Topologically, residues 1-18 are cytoplasmic; sequence MEPQDPVKREGRLTPVIV. Residues 19–39 form a helical membrane-spanning segment; it reads LATLIAAFGSSFQYGYNVATI. Tyr32 serves as a coordination point for D-fructose. Over 40 to 68 the chain is Extracellular; the sequence is NSPSEFMKDFYNYTYYDRVGEYMNEFYLT. Asn51 is a glycosylation site (N-linked (GlcNAc...) asparagine). Residues 69–91 form a helical membrane-spanning segment; that stretch reads LLWSVTVSMFPFGGFLGSLMVGP. The Cytoplasmic portion of the chain corresponds to 92–98; that stretch reads LVNNLGR. A helical membrane pass occupies residues 99–119; the sequence is KGTLLFNNIFSIVPALLMGFS. The Extracellular segment spans residues 120–126; the sequence is DLAKSFE. Residues 127-149 form a helical membrane-spanning segment; it reads MIIVARVLVGICAGLSSNVVPMY. Residues 150–161 are Cytoplasmic-facing; that stretch reads LGELAPKNWRGA. A helical transmembrane segment spans residues 162 to 182; the sequence is LGVVPQLFITIGILVAQIFGL. Gln167 contacts D-fructose. The Extracellular portion of the chain corresponds to 183–192; sequence RSLLANEEGW. The chain crosses the membrane as a helical span at residues 193-213; the sequence is PILLGLTGIPAVLQLLFLPFF. At 214 to 277 the chain is on the cytoplasmic side; the sequence is PESPRYLLIQ…LFKMRSLRWQ (64 aa). Residues 278–298 form a helical membrane-spanning segment; sequence VISIIVLMAGQQLSGVNAIYY. Residues Gln288 and 296 to 298 contribute to the D-fructose site; that span reads IYY. At 299-313 the chain is on the extracellular side; it reads YADQIYLSAGVKEDD. The chain crosses the membrane as a helical span at residues 314–334; that stretch reads VQYVTAGTGAVNVLITVCAIF. Over 335 to 342 the chain is Cytoplasmic; the sequence is VVELMGRR. A helical membrane pass occupies residues 343 to 363; sequence FLLLLGFSVCFTACCVLTGAL. Over 364-371 the chain is Extracellular; sequence AMQDVISW. A helical transmembrane segment spans residues 372 to 394; the sequence is MPYVSIACVISYVIGHALGPSPI. D-fructose is bound at residue His387. Residues 395 to 412 are Cytoplasmic-facing; sequence PALLVTEIFLQSSRPAAY. Residues 413–433 form a helical membrane-spanning segment; the sequence is MVAGTVHWLSNFTVGLVFPFI. A D-fructose-binding site is contributed by 419–420; the sequence is HW. At 434–439 the chain is on the extracellular side; that stretch reads QVGLGA. A helical membrane pass occupies residues 440–460; that stretch reads YSFVIFAVICFLTTVYIFLII. Topologically, residues 461 to 501 are cytoplasmic; sequence PETKSKTFIEINQIFIKMNKVPGVHPEKEELKEFPPSTARQ.

It belongs to the major facilitator superfamily. Sugar transporter (TC 2.A.1.1) family. Glucose transporter subfamily.

It localises to the apical cell membrane. Its subcellular location is the cell membrane. The protein resides in the sarcolemma. It catalyses the reaction D-fructose(out) = D-fructose(in). Functions as a fructose transporter that has only low activity with other monosaccharides. Can mediate the uptake of deoxyglucose, but with low efficiency. Essential for fructose uptake in the small intestine. Plays a role in the regulation of salt uptake and blood pressure in response to dietary fructose. Required for the development of high blood pressure in response to high dietary fructose intake. This is Solute carrier family 2, facilitated glucose transporter member 5 from Ovis aries (Sheep).